The sequence spans 356 residues: Protein-glutamate methylesterase/protein-glutamine glutaminase 2 (356 aa).

In terms of domain architecture, Response regulatory spans 6 to 123 (KVLIVDDSAL…KQFLEESSIR (118 aa)). D57 carries the 4-aspartylphosphate modification. The region spanning 165–356 (VQRTEKVVVV…AAAIVKACNS (192 aa)) is the CheB-type methylesterase domain. Catalysis depends on residues S177, H203, and D299.

Belongs to the CheB family. In terms of processing, phosphorylated by CheA. Phosphorylation of the N-terminal regulatory domain activates the methylesterase activity.

Its subcellular location is the cytoplasm. The catalysed reaction is [protein]-L-glutamate 5-O-methyl ester + H2O = L-glutamyl-[protein] + methanol + H(+). The enzyme catalyses L-glutaminyl-[protein] + H2O = L-glutamyl-[protein] + NH4(+). Functionally, involved in chemotaxis. Part of a chemotaxis signal transduction system that modulates chemotaxis in response to various stimuli. Catalyzes the demethylation of specific methylglutamate residues introduced into the chemoreceptors (methyl-accepting chemotaxis proteins or MCP) by CheR. Also mediates the irreversible deamidation of specific glutamine residues to glutamic acid. This is Protein-glutamate methylesterase/protein-glutamine glutaminase 2 from Oleidesulfovibrio alaskensis (strain ATCC BAA-1058 / DSM 17464 / G20) (Desulfovibrio alaskensis).